The sequence spans 1322 residues: Structural polyprotein (1322 aa).

Disordered regions lie at residues 18 to 41 (FAPA…EPQV) and 61 to 128 (AGLA…RISV). The host transcription inhibition stretch occupies residues 48–81 (ALANQMSALQLQVAGLAGQARVDRRGPRRVQKNK). The span at 73–86 (GPRRVQKNKQKKKN) shows a compositional bias: basic residues. A Nuclear localization signal motif is present at residues 74–120 (PRRVQKNKQKKKNSSNGEKPKEKKKKQKQQEKKGSGGEKAKKPRNRP). Basic and acidic residues predominate over residues 101 to 113 (KQQEKKGSGGEKA). Positions 101-135 (KQQEKKGSGGEKAKKPRNRPGKEVRISVKRARQST) are binding to the viral RNA. Positions 120 to 134 (PGKEVRISVKRARQS) are ribosome-binding. Residues 134–283 (STFPVYHDGA…EIAYSEAIPW (150 aa)) enclose the Peptidase S3 domain. The Charge relay system role is filled by His160. A Nuclear export signal motif is present at residues 165–175 (FDHPELADIKF). Asp182 (charge relay system) is an active-site residue. Residues 203–213 (MDGVYNGEYGN) are dimerization of the capsid protein. Ser234 acts as the Charge relay system in catalysis. The interval 240–244 (DNSGK) is dimerization of the capsid protein. The tract at residues 284-303 (TRAPALLLLPMVIACTYNSN) is functions as an uncleaved signal peptide for the precursor of protein E3/E2. Disulfide bonds link Cys298–Cys307, Cys382–Cys488, Cys385–Cys390, Cys455–Cys469, and Cys517–Cys634. Residues 355 to 735 (AVSTSPVAVY…VHHIKHHPEY (381 aa)) are Extracellular-facing. A helical membrane pass occupies residues 736-756 (AWAFVGVACGLLAVAACMFAC). Topologically, residues 757–792 (ACNRVRYSLLANTFNPNPPPLTALTAALCCIPGARA) are cytoplasmic. The transient transmembrane before p62-6K protein processing stretch occupies residues 761–785 (VRYSLLANTFNPNPPPLTALTAALC). 2 S-palmitoyl cysteine; by host lipidation sites follow: Cys785 and Cys786. The Extracellular segment spans residues 793–808 (DQPYLDIIAYLWTNSK). A helical membrane pass occupies residues 809–829 (VAFGLQCAAPVACMLIVTYAL). At 830-834 (RHCRL) the chain is on the cytoplasmic side. The helical transmembrane segment at 835-855 (CCNSFLGVRGWSALLVILAYV) threads the bilayer. The Extracellular segment spans residues 856–1287 (QSCKAYEHTV…YISGPAMRWA (432 aa)). 8 disulfide bridges follow: Cys910–Cys985, Cys923–Cys965, Cys924–Cys967, Cys929–Cys949, Cys1135–Cys1147, Cys1177–Cys1253, Cys1182–Cys1257, and Cys1204–Cys1247. The tract at residues 955-972 (VYPLLWGAAHCFCSTENT) is E1 fusion peptide loop. A helical membrane pass occupies residues 1288–1309 (GRIVGNPSGPVSSSLAVTYCVV). At 1310 to 1322 (KKCRSKRIRIVKS) the chain is on the cytoplasmic side. Residue Cys1312 is the site of S-stearoyl cysteine; by host attachment.

As to quaternary structure, homodimer. Homomultimer. Interacts with host karyopherin KPNA4; this interaction allows the nuclear import of the viral capsid protein. Interacts with spike glycoprotein E2. Interacts with host IRAK1; the interaction leads to inhibition of IRAK1-dependent signaling. The precursor of protein E3/E2 and E1 form a heterodimer shortly after synthesis. In terms of assembly, interacts with spike glycoprotein E2. The precursor of protein E3/E2 and E1 form a heterodimer shortly after synthesis. Processing of the precursor of protein E3/E2 into E2 and E3 results in a heterodimer of the spike glycoproteins E2 and E1. Spike at virion surface are constituted of three E2-E1 heterodimers. After target cell attachment and endocytosis, E1 change conformation to form homotrimers. Interacts with 6K protein. As to quaternary structure, interacts with spike glycoprotein E1. Processing of the precursor of protein E3/E2 into E2 and E3 results in a heterodimer of the spike glycoproteins E2 and E1. Spike at virion surface are constituted of a trimer of E2-E1 heterodimers. Interacts with 6K protein. Oligomer. Interacts with spike glycoprotein E1. Interacts with spike glycoprotein E2. Post-translationally, structural polyprotein: Specific enzymatic cleavages in vivo yield mature proteins. Capsid protein is auto-cleaved during polyprotein translation, unmasking a signal peptide at the N-terminus of the precursor of E3/E2. The remaining polyprotein is then targeted to the host endoplasmic reticulum, where host signal peptidase cleaves it into pE2, 6K and E1 proteins. pE2 is further processed to mature E3 and E2 by host furin in trans-Golgi vesicle. In terms of processing, palmitoylated via thioester bonds. These palmitoylations may induce disruption of the C-terminus transmembrane. This would result in the reorientation of E2 C-terminus from lumenal to cytoplasmic side. N-glycosylated. Post-translationally, palmitoylated via thioester bonds.

The protein localises to the virion. The protein resides in the host cytoplasm. It localises to the host cell membrane. Its subcellular location is the host nucleus. It is found in the virion membrane. The protein localises to the host Golgi apparatus. The protein resides in the host trans-Golgi network. It localises to the host endoplasmic reticulum. The enzyme catalyses Autocatalytic release of the core protein from the N-terminus of the togavirus structural polyprotein by hydrolysis of a -Trp-|-Ser- bond.. Forms an icosahedral capsid with a T=4 symmetry composed of 240 copies of the capsid protein surrounded by a lipid membrane through which penetrate 80 spikes composed of trimers of E1-E2 heterodimers. The capsid protein binds to the viral RNA genome at a site adjacent to a ribosome binding site for viral genome translation following genome release. Possesses a protease activity that results in its autocatalytic cleavage from the nascent structural protein. Following its self-cleavage, the capsid protein transiently associates with ribosomes, and within several minutes the protein binds to viral RNA and rapidly assembles into icosahedric core particles. The resulting nucleocapsid eventually associates with the cytoplasmic domain of the spike glycoprotein E2 at the cell membrane, leading to budding and formation of mature virions. In case of infection, new virions attach to target cells and after clathrin-mediated endocytosis their membrane fuses with the host endosomal membrane. This leads to the release of the nucleocapsid into the cytoplasm, followed by an uncoating event necessary for the genomic RNA to become accessible. The uncoating might be triggered by the interaction of capsid proteins with ribosomes. Binding of ribosomes would release the genomic RNA since the same region is genomic RNA-binding and ribosome-binding. Specifically inhibits interleukin-1 receptor-associated kinase 1/IRAK1-dependent signaling during viral entry, representing a means by which the alphaviruses may evade innate immune detection and activation prior to viral gene expression. In terms of biological role, provides the signal sequence for the translocation of the precursor of protein E3/E2 to the host endoplasmic reticulum. Furin-cleaved E3 remains associated with spike glycoprotein E1 and mediates pH protection of the latter during the transport via the secretory pathway. After virion release from the host cell, the assembly protein E3 is gradually released in the extracellular space. Functionally, plays a role in viral attachment to target host cell, by binding to the cell receptor. Synthesized as a p62 precursor which is processed by furin at the cell membrane just before virion budding, giving rise to E2-E1 heterodimer. The p62-E1 heterodimer is stable, whereas E2-E1 is unstable and dissociate at low pH. p62 is processed at the last step, presumably to avoid E1 fusion activation before its final export to cell surface. E2 C-terminus contains a transitory transmembrane that would be disrupted by palmitoylation, resulting in reorientation of the C-terminal tail from lumenal to cytoplasmic side. This step is critical since E2 C-terminus is involved in budding by interacting with capsid proteins. This release of E2 C-terminus in cytoplasm occurs lately in protein export, and precludes premature assembly of particles at the endoplasmic reticulum membrane. Its function is as follows. Acts as a viroporin that participates in virus glycoprotein processing and transport to the plasma membrane, cell permeabilization and budding of viral particles. Disrupts the calcium homeostasis of the cell, probably at the endoplasmic reticulum level. This leads to cytoplasmic calcium elevation. Because of its lipophilic properties, the 6K protein is postulated to influence the selection of lipids that interact with the transmembrane domains of the glycoproteins, which, in turn, affects the deformability of the bilayer required for the extreme curvature that occurs as budding proceeds. Present in low amount in virions, about 3% compared to viral glycoproteins. Class II viral fusion protein. Fusion activity is inactive as long as E1 is bound to E2 in mature virion. After virus attachment to target cell and endocytosis, acidification of the endosome induce dissociation of E1/E2 heterodimer and concomitant trimerization of the E1 subunits. This E1 trimer is fusion active, and promotes release of viral nucleocapsid in cytoplasm after endosome and viral membrane fusion. Efficient fusion requires the presence of cholesterol and sphingolipid in the target membrane. This is Structural polyprotein from Oncorhynchus mykiss (Rainbow trout).